A 379-amino-acid chain; its full sequence is Succinyl-diaminopimelate desuccinylase (379 aa).

Residue H68 participates in Zn(2+) binding. Residue D70 is part of the active site. A Zn(2+)-binding site is contributed by D101. E135 acts as the Proton acceptor in catalysis. Residues E136, E164, and H350 each coordinate Zn(2+).

It belongs to the peptidase M20A family. DapE subfamily. In terms of assembly, homodimer. Zn(2+) serves as cofactor. Co(2+) is required as a cofactor.

It carries out the reaction N-succinyl-(2S,6S)-2,6-diaminopimelate + H2O = (2S,6S)-2,6-diaminopimelate + succinate. Its pathway is amino-acid biosynthesis; L-lysine biosynthesis via DAP pathway; LL-2,6-diaminopimelate from (S)-tetrahydrodipicolinate (succinylase route): step 3/3. Its function is as follows. Catalyzes the hydrolysis of N-succinyl-L,L-diaminopimelic acid (SDAP), forming succinate and LL-2,6-diaminopimelate (DAP), an intermediate involved in the bacterial biosynthesis of lysine and meso-diaminopimelic acid, an essential component of bacterial cell walls. The chain is Succinyl-diaminopimelate desuccinylase from Bordetella bronchiseptica (strain ATCC BAA-588 / NCTC 13252 / RB50) (Alcaligenes bronchisepticus).